A 290-amino-acid chain; its full sequence is Cilia- and flagella-associated protein 298 (290 aa).

Residue Tyr-264 is modified to Phosphotyrosine.

This sequence belongs to the CFAP298 family. As to quaternary structure, interacts with ZMYND10.

It is found in the cytoplasm. The protein resides in the cytoskeleton. Its subcellular location is the cilium basal body. In terms of biological role, plays a role in motile cilium function, possibly by acting on outer dynein arm assembly. Seems to be important for initiation rather than maintenance of cilium motility. Required for correct positioning of the cilium at the apical cell surface, suggesting an additional role in the planar cell polarity (PCP) pathway. May suppress canonical Wnt signaling activity. The sequence is that of Cilia- and flagella-associated protein 298 from Homo sapiens (Human).